The chain runs to 356 residues: Outer membrane protein Omp38 (356 aa).

Residues 1–19 (MKLSRIALATMLVAAPLAA) form the signal peptide. One can recognise an OmpA-like domain in the interval 221-339 (ELTEDLNMEL…RVFATITGSR (119 aa)).

It belongs to the outer membrane OOP (TC 1.B.6) superfamily. Homotrimer.

The protein localises to the cell outer membrane. Functionally, porin. Induces apoptosis in human cells through caspases-dependent and AIF-dependent pathways. Purified Omp38 enters the cells and localizes to the mitochondria, which leads to a release of proapoptotic molecules such as cytochrome c and AIF (apoptosis-inducing factor). In Acinetobacter baumannii (strain ATCC 17978 / DSM 105126 / CIP 53.77 / LMG 1025 / NCDC KC755 / 5377), this protein is Outer membrane protein Omp38 (omp38).